Consider the following 857-residue polypeptide: Facilitated trehalose transporter Tret1-1 (857 aa).

2 disordered regions span residues 1–28 and 62–203; these read MSGRDSRGAGGGGGGHQPLSNAMGKLKE and DPFL…KATS. At 1 to 392 the chain is on the cytoplasmic side; it reads MSGRDSRGAG…VYRPTTNPIY (392 aa). The span at 69–81 shows a compositional bias: polar residues; it reads VSPQRHPQNTVRT. Over residues 134-143 the composition is skewed to basic and acidic residues; sequence EIREHRDRQQ. Polar residues predominate over residues 171-181; the sequence is GNSNTNSNKAA. Phosphoserine is present on residues serine 248, serine 249, serine 250, serine 320, and serine 322. Positions 327–346 are disordered; it reads LTSRQHFQQQRSISTDSRKS. A compositionally biased stretch (polar residues) spans 330–341; sequence RQHFQQQRSIST. A helical membrane pass occupies residues 393 to 413; sequence IWTQVLAALSVSLGSLVVGFV. The Extracellular segment spans residues 414-440; that stretch reads SAYTSPALVSMTDRNITSFEVTQDAGS. N-linked (GlcNAc...) asparagine glycosylation is present at asparagine 428. A helical membrane pass occupies residues 441–461; the sequence is WVGGIMPLAGLAGGIAGGPLI. Topologically, residues 462 to 473 are cytoplasmic; the sequence is EYLGRRNTILAT. Residues 474–494 traverse the membrane as a helical segment; that stretch reads AVPFIVSSLLIACAVNVAMVL. At 495–497 the chain is on the extracellular side; the sequence is CGR. A helical transmembrane segment spans residues 498 to 518; sequence FLAGFCVGIASLSLPVYLGET. At 519–528 the chain is on the cytoplasmic side; sequence VQPEVRGTLG. The chain crosses the membrane as a helical span at residues 529 to 549; that stretch reads LLPTAFGNIGILLCFVAGSFM. The N-linked (GlcNAc...) asparagine glycan is linked to asparagine 550. The Extracellular segment spans residues 550-552; it reads NWS. A helical transmembrane segment spans residues 553–573; it reads MLAFLGAALPVPFLILMFLIP. Residues 574 to 636 are Cytoplasmic-facing; sequence ETPRWFVGRG…ELFKRINLKP (63 aa). Residues 637 to 657 form a helical membrane-spanning segment; that stretch reads LSISLGLMFFQQFSGINAVIF. Topologically, residues 658–673 are extracellular; it reads YTVQIFKDAGSTIDSN. Residues 674–694 form a helical membrane-spanning segment; sequence LCTIIVGIVNFFATFMGILLI. Residues 695–700 lie on the Cytoplasmic side of the membrane; it reads DRLGRK. Residues 701–721 traverse the membrane as a helical segment; the sequence is ILLYISDIAMILTLSILGGFF. The Extracellular segment spans residues 722–740; the sequence is YCKAHGPDVSHLGWLPLTC. A helical transmembrane segment spans residues 741–761; the sequence is FVIYILGFSLGFGPIPWLMMG. Residues 762–770 are Cytoplasmic-facing; it reads EILPAKIRG. A helical membrane pass occupies residues 771–791; sequence PAASVVTAFNWFCTFVVTKTF. Residues 792-801 are Extracellular-facing; it reads QDLTGAMGAH. Residues 802–822 form a helical membrane-spanning segment; that stretch reads GAFWLFGAICFVGLFFVIIYV. Residues 823–857 lie on the Cytoplasmic side of the membrane; it reads PETQGKTLEDIERKMMGRVRRMSSVANIKPLSFNM. 2 positions are modified to phosphoserine: serine 845 and serine 846.

It belongs to the major facilitator superfamily. Sugar transporter (TC 2.A.1.1) family. Trehalose transporter subfamily.

Its subcellular location is the cell membrane. In terms of biological role, low-capacity facilitative transporter for trehalose. Does not transport maltose, sucrose or lactose. Mediates the bidirectional transfer of trehalose. Responsible for the transport of trehalose synthesized in the fat body and the incorporation of trehalose into other tissues that require a carbon source, thereby regulating trehalose levels in the hemolymph. The sequence is that of Facilitated trehalose transporter Tret1-1 from Drosophila simulans (Fruit fly).